A 197-amino-acid chain; its full sequence is Imidazoleglycerol-phosphate dehydratase (197 aa).

Belongs to the imidazoleglycerol-phosphate dehydratase family.

It localises to the cytoplasm. The enzyme catalyses D-erythro-1-(imidazol-4-yl)glycerol 3-phosphate = 3-(imidazol-4-yl)-2-oxopropyl phosphate + H2O. The protein operates within amino-acid biosynthesis; L-histidine biosynthesis; L-histidine from 5-phospho-alpha-D-ribose 1-diphosphate: step 6/9. The sequence is that of Imidazoleglycerol-phosphate dehydratase from Rhodopseudomonas palustris (strain BisB5).